We begin with the raw amino-acid sequence, 207 residues long: Oligoribonuclease (207 aa).

Residues 20 to 183 enclose the Exonuclease domain; sequence LVWLDMEMTG…ADIHESIDEL (164 aa). Tyr141 is an active-site residue.

Belongs to the oligoribonuclease family.

It localises to the cytoplasm. 3'-to-5' exoribonuclease specific for small oligoribonucleotides. The polypeptide is Oligoribonuclease (Paraburkholderia xenovorans (strain LB400)).